A 533-amino-acid chain; its full sequence is Drimenyl diphosphate synthase (533 aa).

R132, K133, Q163, and W165 together coordinate (2E,6E)-farnesyl diphosphate. E169 serves as a coordination point for Mg(2+). PFTB repeat units follow at residues 274-316 (VTPM…RRAA), 324-366 (VAEA…AHDP), 372-415 (VDEA…AAHG), 425-466 (AERA…ARGP), and 474-517 (LDRA…FVLL). Residue D303 is the Proton donor of the active site. Residue R501 participates in (2E,6E)-farnesyl diphosphate binding.

The protein belongs to the terpene cyclase/mutase family. Mg(2+) is required as a cofactor. Ni(2+) serves as cofactor. Requires Co(2+) as cofactor.

It catalyses the reaction (2E,6E)-farnesyl diphosphate = (5S,9S,10S)-drim-7-en-11-yl diphosphate. Functionally, catalyzes the cyclization of farnesyl diphosphate (FPP) to drimenyl diphosphate. Cannot use geranylgeranyl diphosphate (GGPP) as substrate. This is Drimenyl diphosphate synthase from Streptomyces showdoensis.